A 322-amino-acid chain; its full sequence is Cytochrome c biogenesis protein CcsA (322 aa).

8 consecutive transmembrane segments (helical) span residues 9–29 (ILTH…LITL), 44–64 (GMIT…IFLG), 71–91 (LYES…VPYF), 97–117 (FLSA…TSGL), 143–163 (MILG…FLVI), 225–245 (IISI…VWAN), 254–274 (WDPK…YFHI), and 286–306 (AIVA…VNLL).

It belongs to the CcmF/CycK/Ccl1/NrfE/CcsA family. As to quaternary structure, may interact with Ccs1.

It localises to the plastid. The protein resides in the chloroplast thylakoid membrane. Required during biogenesis of c-type cytochromes (cytochrome c6 and cytochrome f) at the step of heme attachment. The protein is Cytochrome c biogenesis protein CcsA of Manihot esculenta (Cassava).